Here is a 67-residue protein sequence, read N- to C-terminus: Small ribosomal subunit protein bS21 (67 aa).

It belongs to the bacterial ribosomal protein bS21 family.

This chain is Small ribosomal subunit protein bS21, found in Desulfovibrio desulfuricans (strain ATCC 27774 / DSM 6949 / MB).